Here is a 233-residue protein sequence, read N- to C-terminus: Small ribosomal subunit protein uS3 (233 aa).

One can recognise a KH type-2 domain in the interval 39–107 (VRTFLTKELK…PAQINISEVR (69 aa)).

It belongs to the universal ribosomal protein uS3 family. Part of the 30S ribosomal subunit. Forms a tight complex with proteins S10 and S14.

Binds the lower part of the 30S subunit head. Binds mRNA in the 70S ribosome, positioning it for translation. In Pseudoalteromonas translucida (strain TAC 125), this protein is Small ribosomal subunit protein uS3.